The chain runs to 113 residues: C-X-C motif chemokine 6 (113 aa).

The signal sequence occupies residues 1 to 36; sequence MSLLPSRAARVPGPSSSLCALLALLLLTPPGPLVSA. 2 cysteine pairs are disulfide-bonded: Cys-48-Cys-74 and Cys-50-Cys-90.

This sequence belongs to the intercrine alpha (chemokine CxC) family.

It localises to the secreted. In terms of biological role, chemotactic for neutrophil granulocytes. Signals through binding and activation of its receptors (CXCR1 and CXCR2). In addition to its chemotactic and angiogenic properties, it has strong antibacterial activity against Gram-positive and Gram-negative bacteria (90-fold-higher when compared to CXCL5 and CXCL7). In Equus caballus (Horse), this protein is C-X-C motif chemokine 6 (CXCL6).